The chain runs to 250 residues: MRLDQRAQSDMRKIQLETDVNKHAEGSVLISVGDTRVLCTATVEEKVPPFLRGKRHGWINAEYAMLPRATAQRTGREAVRGKQTGRTMEIQRLISRALRSVVNLEKLGERTVWIDCDVLQADGGTRTAAITGGFLALVLAVDGLIQSGKLTDTPIKEGIAAVSVGKVGTELLLDLCYEEDAAADVDLNLVMTSSGKIVELQATGEEATFSRKEMLDMLELGEKGIEELLHAAEQSLGASWWYVGEEVEHK.

Phosphate contacts are provided by residues arginine 86 and 124-126 (GTR).

It belongs to the RNase PH family. As to quaternary structure, homohexameric ring arranged as a trimer of dimers.

The enzyme catalyses tRNA(n+1) + phosphate = tRNA(n) + a ribonucleoside 5'-diphosphate. Its function is as follows. Phosphorolytic 3'-5' exoribonuclease that plays an important role in tRNA 3'-end maturation. Removes nucleotide residues following the 3'-CCA terminus of tRNAs; can also add nucleotides to the ends of RNA molecules by using nucleoside diphosphates as substrates, but this may not be physiologically important. Probably plays a role in initiation of 16S rRNA degradation (leading to ribosome degradation) during starvation. This chain is Ribonuclease PH, found in Exiguobacterium sibiricum (strain DSM 17290 / CCUG 55495 / CIP 109462 / JCM 13490 / 255-15).